The chain runs to 455 residues: Pentatricopeptide repeat-containing protein At3g26630, chloroplastic (455 aa).

The transit peptide at 1-19 (MAAPSPSSPPNLLSPPPFR) directs the protein to the chloroplast. PPR repeat units follow at residues 51 to 81 (DQLL…LQSP), 82 to 117 (STFT…QSQF), 118 to 152 (DKFT…GFFN), 153 to 187 (DVFF…SIVS), 188 to 214 (WTTM…MPMR), 215 to 249 (NVVS…DVKP), 250 to 284 (NEFT…GFVL), 285 to 315 (DCFL…MQGK), 316 to 350 (SLAT…ASVE), 352 to 387 (DAIT…GISP), and 388 to 418 (IREH…MDSD).

The protein belongs to the PPR family. PCMP-A subfamily.

It localises to the plastid. The protein localises to the chloroplast. This Arabidopsis thaliana (Mouse-ear cress) protein is Pentatricopeptide repeat-containing protein At3g26630, chloroplastic (PCMP-A6).